The chain runs to 313 residues: MNKPVAIFLMGPTASGKTDLAIALRKQLPVEVISVDSALIYKEMDIGTAKPTAAELAQAPHRLIDILDPKESYSAMHFHADALHAMADITASGRIPLLVGGTMLYYKALLEGLSPLPSANEHIRTEIEAHANQYGWASLHQQLTQIDPLAASRINANDSQRINRALEVFYLTGKNLTELTAQQGECLPYQVLQFAIAPQERAVLHQRIEQRFHKMMELGFLTEVEKLYARGDLHPDLPAIRCVGYRQMWQHLAGEISLDEAIYKGICATRQLAKRQLTWLRGWRSEITWLDSLDPTSSQEKMIQNLEQNFIKL.

An ATP-binding site is contributed by 11–18 (GPTASGKT). 13-18 (TASGKT) is a binding site for substrate. Interaction with substrate tRNA regions lie at residues 36–39 (DSAL), 160–164 (QRINR), and 241–246 (RCVGYR).

This sequence belongs to the IPP transferase family. As to quaternary structure, monomer. Requires Mg(2+) as cofactor.

It catalyses the reaction adenosine(37) in tRNA + dimethylallyl diphosphate = N(6)-dimethylallyladenosine(37) in tRNA + diphosphate. Catalyzes the transfer of a dimethylallyl group onto the adenine at position 37 in tRNAs that read codons beginning with uridine, leading to the formation of N6-(dimethylallyl)adenosine (i(6)A). This chain is tRNA dimethylallyltransferase, found in Haemophilus ducreyi (strain 35000HP / ATCC 700724).